The chain runs to 419 residues: S-adenosylmethionine synthase (419 aa).

Histidine 15 serves as a coordination point for ATP. Aspartate 17 is a Mg(2+) binding site. Residue glutamate 43 coordinates K(+). Residues glutamate 56 and glutamine 100 each coordinate L-methionine. A flexible loop region spans residues 100-110 (QSPDIAQGVNE). ATP contacts are provided by residues 171–173 (DGK), 248–249 (KF), aspartate 257, 263–264 (RK), alanine 280, and lysine 284. Residue aspartate 257 coordinates L-methionine. Lysine 288 lines the L-methionine pocket.

This sequence belongs to the AdoMet synthase family. In terms of assembly, homotetramer; dimer of dimers. It depends on Mg(2+) as a cofactor. K(+) serves as cofactor.

Its subcellular location is the cytoplasm. The enzyme catalyses L-methionine + ATP + H2O = S-adenosyl-L-methionine + phosphate + diphosphate. Its pathway is amino-acid biosynthesis; S-adenosyl-L-methionine biosynthesis; S-adenosyl-L-methionine from L-methionine: step 1/1. Functionally, catalyzes the formation of S-adenosylmethionine (AdoMet) from methionine and ATP. The overall synthetic reaction is composed of two sequential steps, AdoMet formation and the subsequent tripolyphosphate hydrolysis which occurs prior to release of AdoMet from the enzyme. This chain is S-adenosylmethionine synthase, found in Prochlorococcus marinus (strain MIT 9313).